A 108-amino-acid polypeptide reads, in one-letter code: UPF0060 membrane protein CKO_01576 (108 aa).

Helical transmembrane passes span 6–26 (LLFF…WLWL), 29–49 (GATA…VWLL), 61–81 (AAYG…VDGV), and 85–105 (LYDW…VAGW).

The protein belongs to the UPF0060 family.

It is found in the cell inner membrane. The sequence is that of UPF0060 membrane protein CKO_01576 from Citrobacter koseri (strain ATCC BAA-895 / CDC 4225-83 / SGSC4696).